The sequence spans 855 residues: Protein translocase subunit SecA (855 aa).

Residues Gln85, Gly103–Thr107, and Asp492 contribute to the ATP site. The segment at Ala794–Lys845 is disordered. Residues Ser801 to Asn811 show a composition bias toward low complexity. Positions 839, 841, 850, and 851 each coordinate Zn(2+).

Belongs to the SecA family. As to quaternary structure, monomer and homodimer. Part of the essential Sec protein translocation apparatus which comprises SecA, SecYEG and auxiliary proteins SecDF. Other proteins may also be involved. Requires Zn(2+) as cofactor.

The protein localises to the cell membrane. Its subcellular location is the cytoplasm. It catalyses the reaction ATP + H2O + cellular proteinSide 1 = ADP + phosphate + cellular proteinSide 2.. Functionally, part of the Sec protein translocase complex. Interacts with the SecYEG preprotein conducting channel. Has a central role in coupling the hydrolysis of ATP to the transfer of proteins into and across the cell membrane, serving as an ATP-driven molecular motor driving the stepwise translocation of polypeptide chains across the membrane. This Clostridium beijerinckii (strain ATCC 51743 / NCIMB 8052) (Clostridium acetobutylicum) protein is Protein translocase subunit SecA.